The sequence spans 283 residues: Putative sugar uptake protein BC_0219 (283 aa).

Transmembrane regions (helical) follow at residues leucine 4–valine 21, glycine 26–phenylalanine 48, alanine 52–glycine 71, valine 84–alanine 106, tryptophan 110–phenylalanine 132, leucine 151–isoleucine 173, alanine 178–serine 195, alanine 208–valine 230, phenylalanine 234–glycine 253, and glutamine 260–glycine 279.

It belongs to the GRP transporter (TC 2.A.7.5) family.

Its subcellular location is the cell membrane. The protein is Putative sugar uptake protein BC_0219 of Bacillus cereus (strain ATCC 14579 / DSM 31 / CCUG 7414 / JCM 2152 / NBRC 15305 / NCIMB 9373 / NCTC 2599 / NRRL B-3711).